The primary structure comprises 308 residues: tRNA dimethylallyltransferase (308 aa).

Position 9–16 (9–16 (GPTAVGKT)) interacts with ATP. 11–16 (TAVGKT) lines the substrate pocket. An interaction with substrate tRNA region spans residues 34-37 (DSMQ).

Belongs to the IPP transferase family. Monomer. Mg(2+) is required as a cofactor.

It catalyses the reaction adenosine(37) in tRNA + dimethylallyl diphosphate = N(6)-dimethylallyladenosine(37) in tRNA + diphosphate. Functionally, catalyzes the transfer of a dimethylallyl group onto the adenine at position 37 in tRNAs that read codons beginning with uridine, leading to the formation of N6-(dimethylallyl)adenosine (i(6)A). The chain is tRNA dimethylallyltransferase from Lactobacillus delbrueckii subsp. bulgaricus (strain ATCC 11842 / DSM 20081 / BCRC 10696 / JCM 1002 / NBRC 13953 / NCIMB 11778 / NCTC 12712 / WDCM 00102 / Lb 14).